We begin with the raw amino-acid sequence, 510 residues long: Lysine--tRNA ligase (510 aa).

Glu420 and Glu427 together coordinate Mg(2+).

The protein belongs to the class-II aminoacyl-tRNA synthetase family. Homodimer. Mg(2+) is required as a cofactor.

Its subcellular location is the cytoplasm. The catalysed reaction is tRNA(Lys) + L-lysine + ATP = L-lysyl-tRNA(Lys) + AMP + diphosphate. This Clostridium novyi (strain NT) protein is Lysine--tRNA ligase.